Here is a 104-residue protein sequence, read N- to C-terminus: DNA-directed RNA polymerase subunit Rpo13 (104 aa).

Disordered stretches follow at residues 1–34 and 76–104; these read MVSGMSTEEEKEGTNDEEVSEEREVEETSEEEFP and EKRDSRRKAKKAASKKVKKTKKKEKSVEG. The span at 7–31 shows a compositional bias: acidic residues; the sequence is TEEEKEGTNDEEVSEEREVEETSEE. Glu-32 is a DNA binding site. The segment covering 80–104 has biased composition (basic residues); the sequence is SRRKAKKAASKKVKKTKKKEKSVEG. The interval 81–104 is required to bind DNA; that stretch reads RRKAKKAASKKVKKTKKKEKSVEG.

Belongs to the archaeal Rpo13 RNA polymerase subunit family. As to quaternary structure, part of the 13-subunit RNA polymerase complex. Rpo1N and Rpo5 form a cleft which docks Rpo13. Forms predominantly dimers in solution, although monomers and trimers can also be seen. Found associated with RNAP but also as a homodimer pool in the cytoplasm in vivo.

Its subcellular location is the cytoplasm. It carries out the reaction RNA(n) + a ribonucleoside 5'-triphosphate = RNA(n+1) + diphosphate. Functionally, DNA-dependent RNA polymerase (RNAP) catalyzes the transcription of DNA into RNA using the four ribonucleoside triphosphates as substrates. A molten-globule protein, it binds dsDNA in the RNAP, in vitro binds dsDNA but not ssDNA. Its position in RNAP implies it functions in both transcription initiation and elongation. This is DNA-directed RNA polymerase subunit Rpo13 from Saccharolobus shibatae (strain ATCC 51178 / DSM 5389 / JCM 8931 / NBRC 15437 / B12) (Sulfolobus shibatae).